The primary structure comprises 288 residues: MASRDFLRVFGAGEGAGPPGDAGAGQPDDDELSLGLSLGGRFGTDAKRPRLARSSSIASVCSVSSLHADPSPAAPLPLLRTTSLPTETEEERWRRREMQSRRRLEARRKRVERRNSMGSVSVAPADAVSGRRSNASQGSNSASTTEQGIGGSMFNQSADAKSPSTSDNRNQNDMLPPTKAAEKPLNGTATEQQPRLRTLGSLTTRTGSTSDIRKLMMEDMPMVSSKVEGPNARRIDGFLYRYKKGEDVRIVCVCHGSFLTPAEFVKHAGGGDVPNPLRHIVVNPAPFS.

Disordered stretches follow at residues Met-1–Arg-50 and Leu-66–Gly-207. The span at Ala-12–Gly-23 shows a compositional bias: gly residues. Residues Leu-76–Thr-86 show a composition bias toward low complexity. Over residues Glu-91–Arg-103 the composition is skewed to basic and acidic residues. The span at Arg-131–Asp-173 shows a compositional bias: polar residues. The segment covering Arg-195 to Gly-207 has biased composition (low complexity).

The protein belongs to the Ninja family.

It localises to the nucleus. The sequence is that of Ninja-family protein 6 from Zea mays (Maize).